Here is a 405-residue protein sequence, read N- to C-terminus: Phosphoglycerate kinase (405 aa).

Substrate is bound by residues 21–23 (DFN), R36, 59–62 (HLGR), R119, and R161. Residues K212, G301, E332, and 361–364 (GGDS) each bind ATP.

This sequence belongs to the phosphoglycerate kinase family. Monomer.

It localises to the cytoplasm. It carries out the reaction (2R)-3-phosphoglycerate + ATP = (2R)-3-phospho-glyceroyl phosphate + ADP. The protein operates within carbohydrate degradation; glycolysis; pyruvate from D-glyceraldehyde 3-phosphate: step 2/5. In Leuconostoc citreum (strain KM20), this protein is Phosphoglycerate kinase.